Consider the following 286-residue polypeptide: Bark leucoagglutinin (286 aa).

The first 28 residues, 1–28 (ATSNSKPTQVLLATFLTFFFLLLNNVNS), serve as a signal peptide directing secretion. Y73 lines the N-acetyl-alpha-neuraminyl-(2-&gt;3)-beta-D-galactosyl-(1-&gt;4)-beta-D-glucose pocket. N89 is a glycosylation site (N-linked (GlcNAc...) asparagine). Residues D115 and K135 each contribute to the N-acetyl-alpha-neuraminyl-(2-&gt;3)-beta-D-galactosyl-(1-&gt;4)-beta-D-glucose site. N-linked (GlcNAc...) asparagine glycosylation occurs at N141. Residues E155 and D157 each coordinate Mn(2+). Ca(2+)-binding residues include D157, Y159, D165, and D168. Positions 159 and 165 each coordinate N-acetyl-alpha-neuraminyl-(2-&gt;3)-beta-D-galactosyl-(1-&gt;4)-beta-D-glucose. Mn(2+)-binding residues include D168 and H173. Residues N207 and N219 are each glycosylated (N-linked (GlcNAc...) asparagine). Positions 278 to 286 (NVHIARYTA) are cleaved as a propeptide — removed in mature form.

This sequence belongs to the leguminous lectin family.

Functionally, sialic acid-binding lectin specifically recognizing the trisaccharide sequence Neu5Ac/Gc-alpha-2,3-Gal-beta-1,4-GlcNAc/Glc. The polypeptide is Bark leucoagglutinin (Maackia amurensis (Amur maackia)).